The sequence spans 386 residues: Protein-glutamate methylesterase/protein-glutamine glutaminase (386 aa).

Positions 4 to 121 constitute a Response regulatory domain; it reads KVLVVDDSAF…ARNRDEAVKT (118 aa). Residue aspartate 55 is modified to 4-aspartylphosphate. A disordered region spans residues 133–161; the sequence is PVSRTSARASTPPPVAKQPERSSEPTTAL. The CheB-type methylesterase domain maps to 190-384; sequence INRAYQLLAI…KAIMKEVGYS (195 aa). Residues serine 202, histidine 229, and aspartate 326 contribute to the active site.

Belongs to the CheB family. Phosphorylated by CheA. Phosphorylation of the N-terminal regulatory domain activates the methylesterase activity.

The protein resides in the cytoplasm. It carries out the reaction [protein]-L-glutamate 5-O-methyl ester + H2O = L-glutamyl-[protein] + methanol + H(+). The catalysed reaction is L-glutaminyl-[protein] + H2O = L-glutamyl-[protein] + NH4(+). In terms of biological role, involved in chemotaxis. Part of a chemotaxis signal transduction system that modulates chemotaxis in response to various stimuli. Catalyzes the demethylation of specific methylglutamate residues introduced into the chemoreceptors (methyl-accepting chemotaxis proteins or MCP) by CheR. Also mediates the irreversible deamidation of specific glutamine residues to glutamic acid. This Idiomarina loihiensis (strain ATCC BAA-735 / DSM 15497 / L2-TR) protein is Protein-glutamate methylesterase/protein-glutamine glutaminase.